An 86-amino-acid polypeptide reads, in one-letter code: uncharacterized protein (86 aa).

2 helical membrane-spanning segments follow: residues 20–38 (IQFW…SVYL) and 47–63 (FSTF…TKGV). The interval 67–86 (LSQRREQGKEQGREQGREQE) is disordered. Basic and acidic residues predominate over residues 69-86 (QRREQGKEQGREQGREQE).

The protein localises to the cell membrane. This is an uncharacterized protein from Haemophilus influenzae (strain ATCC 51907 / DSM 11121 / KW20 / Rd).